The chain runs to 783 residues: Probable phosphoketolase (783 aa).

It belongs to the XFP family. It depends on thiamine diphosphate as a cofactor.

The protein is Probable phosphoketolase of Rhodopseudomonas palustris (strain TIE-1).